A 675-amino-acid polypeptide reads, in one-letter code: Dihydrolipoyllysine-residue acetyltransferase component of pyruvate dehydrogenase complex (675 aa).

The region spanning 2-77 (AFSVEMPELG…DVGGVIAIIG (76 aa)) is the Lipoyl-binding 1 domain. Lysine 43 bears the N6-lipoyllysine mark. Residues 77 to 124 (GDADETPANEAPADEAPAPAEEEEPVKEEPKKEAAPEAPAATGAATDV) form a disordered region. Composition is skewed to low complexity over residues 84–95 (ANEAPADEAPAP) and 112–124 (PEAP…ATDV). One can recognise a Lipoyl-binding 2 domain in the interval 121-196 (ATDVEMPELG…DVGAVIARIG (76 aa)). Position 162 is an N6-lipoyllysine (lysine 162). The interval 200–240 (AAAAPAEEEAAPAEEEEPVKEEPKKEAAPEAPAATGAATDV) is disordered. Residues 205 to 218 (AEEEAAPAEEEEPV) show a composition bias toward acidic residues. Positions 237-312 (ATDVEMPELG…DVGAVIARIG (76 aa)) constitute a Lipoyl-binding 3 domain. Lysine 278 is subject to N6-lipoyllysine. The interval 316–368 (AAAAPAEEEAAPAEEEEPVKEEPKKEEPKKEEPKKEAATTPAAASATVSASGD) is disordered. A compositionally biased stretch (acidic residues) spans 321–334 (AEEEAAPAEEEEPV). Positions 335-352 (KEEPKKEEPKKEEPKKEA) are enriched in basic and acidic residues. The segment covering 353–366 (ATTPAAASATVSAS) has biased composition (low complexity). The region spanning 372-409 (YVTPLVRKLAEKHGVDLNTVTGTGIGGRIRKQDVLAAA) is the Peripheral subunit-binding (PSBD) domain. Catalysis depends on residues histidine 645 and aspartate 649.

Belongs to the 2-oxoacid dehydrogenase family. In terms of assembly, forms a 24-polypeptide structural core with octahedral symmetry. Part of an unusual ODH/PDH supercomplex, consisting of AceE (E1), AceF (E2), and Lpd (E3) together with OdhA (E1+E2). Requires (R)-lipoate as cofactor.

It carries out the reaction N(6)-[(R)-dihydrolipoyl]-L-lysyl-[protein] + acetyl-CoA = N(6)-[(R)-S(8)-acetyldihydrolipoyl]-L-lysyl-[protein] + CoA. In terms of biological role, is essential for both 2-oxoglutarate dehydrogenase (ODH) and pyruvate dehydrogenase (PDH) activities, but AceF has exclusively transacetylase (and no transsuccinylase) activity. The lipoyl residues required for ODH activity are likely provided by AceF. This chain is Dihydrolipoyllysine-residue acetyltransferase component of pyruvate dehydrogenase complex (aceF), found in Corynebacterium glutamicum (strain ATCC 13032 / DSM 20300 / JCM 1318 / BCRC 11384 / CCUG 27702 / LMG 3730 / NBRC 12168 / NCIMB 10025 / NRRL B-2784 / 534).